A 614-amino-acid chain; its full sequence is Translation initiation factor IF-2 (614 aa).

Residues 115–283 (ARAPIVTIMG…ILLIAELNNY (169 aa)) form the tr-type G domain. Residues 124–131 (GHVDHGKT) form a G1 region. 124-131 (GHVDHGKT) is a GTP binding site. A G2 region spans residues 149–153 (GITQH). The interval 170–173 (DTPG) is G3. GTP contacts are provided by residues 170–174 (DTPGH) and 224–227 (NKMD). The segment at 224–227 (NKMD) is G4. The interval 260–262 (SAL) is G5.

The protein belongs to the TRAFAC class translation factor GTPase superfamily. Classic translation factor GTPase family. IF-2 subfamily.

The protein resides in the cytoplasm. Functionally, one of the essential components for the initiation of protein synthesis. Protects formylmethionyl-tRNA from spontaneous hydrolysis and promotes its binding to the 30S ribosomal subunits. Also involved in the hydrolysis of GTP during the formation of the 70S ribosomal complex. This chain is Translation initiation factor IF-2, found in Ureaplasma parvum serovar 3 (strain ATCC 27815 / 27 / NCTC 11736).